The chain runs to 798 residues: Integrin beta-1 (798 aa).

The N-terminal stretch at 1-20 (MNLQPIFWIGLISSICCVFA) is a signal peptide. Residues 26–76 (RCLKANAKSCGECIQAGPNCGWCTNSTFLQEGMPTSARCDDLEALKKKGCP) enclose the PSI domain. Cystine bridges form between Cys27/Cys45, Cys35/Cys464, Cys38/Cys64, Cys48/Cys75, Cys207/Cys213, Cys261/Cys301, Cys401/Cys415, Cys435/Cys462, Cys466/Cys486, Cys477/Cys489, Cys491/Cys500, Cys502/Cys533, Cys516/Cys531, Cys525/Cys536, Cys538/Cys553, Cys555/Cys576, Cys560/Cys574, Cys568/Cys579, Cys581/Cys590, Cys592/Cys615, Cys599/Cys613, Cys607/Cys618, Cys620/Cys630, Cys633/Cys636, Cys640/Cys691, Cys646/Cys665, Cys649/Cys661, and Cys699/Cys723. Asn50 is a glycosylation site (N-linked (GlcNAc...) asparagine). Positions 75–107 (CPPDDIENPRGSKDIKKNKNVTNRSKGTAEKLK) are disordered. Residues 81–91 (ENPRGSKDIKK) show a composition bias toward basic and acidic residues. 2 N-linked (GlcNAc...) asparagine glycosylation sites follow: Asn94 and Asn97. The 239-residue stretch at 140 to 378 (DYPIDLYYLM…QLIIDAYNSL (239 aa)) folds into the VWFA domain. Mg(2+) is bound by residues Ser152 and Ser154. Positions 154, 157, 158, and 189 each coordinate Ca(2+). Residues 207 to 213 (CTSEQNC) are CX3CL1-binding. Asn212 carries N-linked (GlcNAc...) asparagine glycosylation. Ca(2+) is bound by residues Asn244, Asp246, Pro248, and Glu249. Residue Glu249 coordinates Mg(2+). The N-linked (GlcNAc...) asparagine glycan is linked to Asn269. Residues 295 to 314 (LPNDGQCHLENNMYTMSHYY) are CX3CL1-binding. Ala362 serves as a coordination point for Ca(2+). N-linked (GlcNAc...) asparagine glycans are attached at residues Asn363, Asn406, and Asn417. Residues 383 to 465 (ILENSKLSEG…VILQYICECE (83 aa)) form an interaction with TMEM182 region. I-EGF domains follow at residues 466–501 (CQSE…RHCE), 502–554 (CSTD…KFCE), 555–591 (CDNF…SACD), and 592–631 (CSLD…QTCE). A glycan (N-linked (GlcNAc...) asparagine) is linked at Asn481. Asn520 carries an N-linked (GlcNAc...) asparagine glycan. An N-linked (GlcNAc...) asparagine glycan is attached at Asn584. Asn669 carries an N-linked (GlcNAc...) asparagine glycan. A helical transmembrane segment spans residues 729-749 (IIPIVAGVVAGIVLIGLALLL). The tract at residues 762–767 (EFAKFE) is signal for sorting from recycling endosomes; interaction with ACAP1. Thr777 is subject to Phosphothreonine. Tyr783 carries the phosphotyrosine modification. Ser785 carries the phosphoserine modification. The interaction with ITGB1BP1 stretch occupies residues 785 to 792 (SAVTTVVN). At Thr789 the chain carries Phosphothreonine. Position 794 is an N6-acetyllysine; alternate (Lys794). Lys794 participates in a covalent cross-link: Glycyl lysine isopeptide (Lys-Gly) (interchain with G-Cter in SUMO1); alternate.

It belongs to the integrin beta chain family. In terms of assembly, interacts with seprase FAP (seprase); the interaction occurs at the cell surface of invadopodia membrane in a collagen-dependent manner. Heterodimer of an alpha and a beta subunit. Beta-1 associates with either alpha-1, alpha-2, alpha-3, alpha-4, alpha-5, alpha-6, alpha-7, alpha-8, alpha-9, alpha-10, alpha-11 or alpha-V. ITGA6:ITGB1 is found in a complex with CD9; interaction takes place in oocytes and is involved in sperm-egg fusion. Binds LGALS3BP and NMRK2, when associated with alpha-7, but not with alpha-5. Interacts with FLNA, FLNB, FLNC and RANBP9. Interacts with KRT1 in the presence of RACK1 and SRC. Interacts with JAML; integrin alpha-4/beta-1 may regulate leukocyte to endothelial cells adhesion by controlling JAML homodimerization. Interacts with RAB21. Interacts (via the cytoplasmic region) with RAB25 (via the hypervariable C-terminal region). Interacts with MYO10. Interacts with ITGB1BP1 (via C-terminal region); the interaction is a prerequisite for focal adhesion disassembly. Interacts with TLN1; the interaction is prevented by competitive binding of ITGB1BP1. Interacts with ACAP1; required for ITGB1 recycling. Interacts with ASAP3. Interacts with FERMT2; the interaction is inhibited in presence of ITGB1BP1. Interacts with DAB2. Interacts with FGR and HCK. Interacts with alpha-7A and alpha-7B in adult skeletal muscle. Interacts with alpha-7B in cardiomyocytes of adult heart. Interacts with EMP2; the interaction may be direct or indirect and ITGB1 has a heterodimer form. ITGA5:ITGB1 interacts with CCN3. ITGA4:ITGB1 is found in a ternary complex with CX3CR1 and CX3CL1. ITGA5:ITGB1 interacts with FBN1. ITGA5:ITGB1 acts as a receptor for fibronectin FN1 and mediates R-G-D-dependent cell adhesion to FN1. ITGA5:ITGB1 interacts with IL1B. Interacts with MDK. ITGA4:ITGB1 interacts with MDK; this interaction mediates MDK-induced osteoblast cells migration through PXN phosphorylation. ITGA6:ITGB1 interacts with MDK; this interaction mediates MDK-induced neurite-outgrowth. ITGA5:ITGB1 interacts with ACE2. Interacts with TMEM182 and LAMB1. Interacts with tensin TNS3; TNS3 also interacts with PEAK1, thus acting as an adapter molecule to bridge the association of PEAK1 with ITGB1. Interacts with tensin TNS4; the interaction displaces tensin TNS3 from the ITGB1 cytoplasmic tail and promotes ITGB1 stability. Integrin ITGA9:ITGB1 interacts with SPP1/OPN (via N-terminus). Integrin ITGA9:ITGB1 interacts with TNC/TNFN3 (via the 3rd Fibronectin type-III domain). Integrins ITGA4:ITGB1 and ITGA9:ITGB1 interact with SVEP1 (via Sushi domain 21); thereby inhibit Ca(2+) intracellular signaling and as a result repress vasocontraction. ITGA4:ITGB1 and ITGA5:ITGB1 interacts with SELP. Interacts with CD248. ITGA5:ITGB1 interacts with IGFBP1. ITGA4:ITGB1 interacts with BCAM. Interacts with ADGRG6.

It is found in the cell membrane. The protein localises to the cell projection. Its subcellular location is the invadopodium membrane. It localises to the ruffle membrane. The protein resides in the recycling endosome. It is found in the melanosome. The protein localises to the lamellipodium. Its subcellular location is the ruffle. It localises to the cell junction. The protein resides in the focal adhesion. Functionally, integrins alpha-1/beta-1, alpha-2/beta-1, alpha-10/beta-1 and alpha-11/beta-1 are receptors for collagen. Integrins alpha-1/beta-1 and alpha-2/beta-2 recognize the proline-hydroxylated sequence G-F-P-G-E-R in collagen. Integrins alpha-2/beta-1, alpha-3/beta-1, alpha-4/beta-1, alpha-5/beta-1, alpha-8/beta-1, alpha-10/beta-1, alpha-11/beta-1 and alpha-V/beta-1 are receptors for fibronectin. Alpha-4/beta-1 recognizes one or more domains within the alternatively spliced CS-1 and CS-5 regions of fibronectin. Integrin alpha-5/beta-1 is a receptor for fibrinogen. Integrin alpha-1/beta-1, alpha-2/beta-1, alpha-6/beta-1 and alpha-7/beta-1 are receptors for lamimin. Integrin alpha-6/beta-1 (ITGA6:ITGB1) is present in oocytes and is involved in sperm-egg fusion. Integrin alpha-4/beta-1 is a receptor for VCAM1 and recognizes the sequence Q-I-D-S in VCAM1. Integrin alpha-9/beta-1 is a receptor for VCAM1, cytotactin and osteopontin. It recognizes the sequence A-E-I-D-G-I-E-L in cytotactin. Integrin alpha-3/beta-1 is a receptor for epiligrin, thrombospondin and CSPG4. Integrin alpha-3/beta-1 provides a docking site for FAP (seprase) at invadopodia plasma membranes in a collagen-dependent manner and hence may participate in the adhesion, formation of invadopodia and matrix degradation processes, promoting cell invasion. Alpha-3/beta-1 may mediate with LGALS3 the stimulation by CSPG4 of endothelial cells migration. Integrin alpha-V/beta-1 is a receptor for vitronectin. Beta-1 integrins recognize the sequence R-G-D in a wide array of ligands. When associated with alpha-7/beta-1 integrin, regulates cell adhesion and laminin matrix deposition. Involved in promoting endothelial cell motility and angiogenesis. Involved in osteoblast compaction through the fibronectin fibrillogenesis cell-mediated matrix assembly process and the formation of mineralized bone nodules. May be involved in up-regulation of the activity of kinases such as PKC via binding to KRT1. Together with KRT1 and RACK1, serves as a platform for SRC activation or inactivation. Plays a mechanistic adhesive role during telophase, required for the successful completion of cytokinesis. ITGA4:ITGB1 binds to fractalkine (CX3CL1) and may act as its coreceptor in CX3CR1-dependent fractalkine signaling. ITGA4:ITGB1 and ITGA5:ITGB1 bind to PLA2G2A via a site (site 2) which is distinct from the classical ligand-binding site (site 1) and this induces integrin conformational changes and enhanced ligand binding to site 1. ITGA5:ITGB1 acts as a receptor for fibrillin-1 (FBN1) and mediates R-G-D-dependent cell adhesion to FBN1. ITGA5:ITGB1 is a receptor for IL1B and binding is essential for IL1B signaling. ITGA5:ITGB3 is a receptor for soluble CD40LG and is required for CD40/CD40LG signaling. Plays an important role in myoblast differentiation and fusion during skeletal myogenesis. ITGA9:ITGB1 may play a crucial role in SVEP1/polydom-mediated myoblast cell adhesion. Integrins ITGA9:ITGB1 and ITGA4:ITGB1 repress PRKCA-mediated L-type voltage-gated channel Ca(2+) influx and ROCK-mediated calcium sensitivity in vascular smooth muscle cells via their interaction with SVEP1, thereby inhibit vasocontraction. This Pongo abelii (Sumatran orangutan) protein is Integrin beta-1 (ITGB1).